A 162-amino-acid chain; its full sequence is NADH-quinone oxidoreductase subunit I (162 aa).

2 4Fe-4S ferredoxin-type domains span residues 54–83 (RRYE…IESE) and 93–122 (TRYD…ETQI). [4Fe-4S] cluster contacts are provided by Cys-63, Cys-66, Cys-69, Cys-73, Cys-102, Cys-105, Cys-108, and Cys-112.

The protein belongs to the complex I 23 kDa subunit family. As to quaternary structure, NDH-1 is composed of 14 different subunits. Subunits NuoA, H, J, K, L, M, N constitute the membrane sector of the complex. Requires [4Fe-4S] cluster as cofactor.

Its subcellular location is the cell inner membrane. The catalysed reaction is a quinone + NADH + 5 H(+)(in) = a quinol + NAD(+) + 4 H(+)(out). NDH-1 shuttles electrons from NADH, via FMN and iron-sulfur (Fe-S) centers, to quinones in the respiratory chain. The immediate electron acceptor for the enzyme in this species is believed to be ubiquinone. Couples the redox reaction to proton translocation (for every two electrons transferred, four hydrogen ions are translocated across the cytoplasmic membrane), and thus conserves the redox energy in a proton gradient. The polypeptide is NADH-quinone oxidoreductase subunit I (Burkholderia thailandensis (strain ATCC 700388 / DSM 13276 / CCUG 48851 / CIP 106301 / E264)).